A 271-amino-acid chain; its full sequence is Formamidopyrimidine-DNA glycosylase (271 aa).

The Schiff-base intermediate with DNA role is filled by Pro2. Residue Glu3 is the Proton donor of the active site. Lys58 (proton donor; for beta-elimination activity) is an active-site residue. DNA-binding residues include His91, Arg110, and Arg152. The FPG-type zinc finger occupies 237–271 (RVYGRTGLACMACETPVKQIVQGNRSTYYCPACQR). Arg261 (proton donor; for delta-elimination activity) is an active-site residue.

It belongs to the FPG family. As to quaternary structure, monomer. Zn(2+) is required as a cofactor.

It carries out the reaction Hydrolysis of DNA containing ring-opened 7-methylguanine residues, releasing 2,6-diamino-4-hydroxy-5-(N-methyl)formamidopyrimidine.. The enzyme catalyses 2'-deoxyribonucleotide-(2'-deoxyribose 5'-phosphate)-2'-deoxyribonucleotide-DNA = a 3'-end 2'-deoxyribonucleotide-(2,3-dehydro-2,3-deoxyribose 5'-phosphate)-DNA + a 5'-end 5'-phospho-2'-deoxyribonucleoside-DNA + H(+). Its function is as follows. Involved in base excision repair of DNA damaged by oxidation or by mutagenic agents. Acts as a DNA glycosylase that recognizes and removes damaged bases. Has a preference for oxidized purines, such as 7,8-dihydro-8-oxoguanine (8-oxoG). Has AP (apurinic/apyrimidinic) lyase activity and introduces nicks in the DNA strand. Cleaves the DNA backbone by beta-delta elimination to generate a single-strand break at the site of the removed base with both 3'- and 5'-phosphates. The chain is Formamidopyrimidine-DNA glycosylase from Thioalkalivibrio sulfidiphilus (strain HL-EbGR7).